The sequence spans 552 residues: Glutathione reductase, chloroplastic/mitochondrial (552 aa).

Residues 1–60 constitute a chloroplast and mitochondrion transit peptide; that stretch reads MNQAMATPLSLSCCSPTLTRSTLFFTKTFPFSRSFSTPLPLSTKTLISLSPPHRTFAVRA. Positions 83, 84, 103, 120, 121, and 129 each coordinate FAD. Residue S83 coordinates glutathione. C121 and C126 are disulfide-bonded. Y178 provides a ligand contact to glutathione. G194 lines the FAD pocket. 6 residues coordinate NADP(+): G254, I257, E260, R277, R283, and G341. 2 residues coordinate FAD: D382 and T390. An NADP(+)-binding site is contributed by A420. FAD is bound at residue H515. Residue H515 is the Proton acceptor of the active site. The disordered stretch occupies residues 527–552; sequence TPTRKVRKNQASQGKSDSKAKAVAGS.

This sequence belongs to the class-I pyridine nucleotide-disulfide oxidoreductase family. Homodimer. FAD serves as cofactor.

Its subcellular location is the plastid. The protein resides in the chloroplast. The protein localises to the mitochondrion. The enzyme catalyses 2 glutathione + NADP(+) = glutathione disulfide + NADPH + H(+). Its function is as follows. Catalyzes the reduction of glutathione disulfide (GSSG) to reduced glutathione (GSH). Maintains high levels of GSH in the chloroplast. This Pisum sativum (Garden pea) protein is Glutathione reductase, chloroplastic/mitochondrial (GR).